The following is a 598-amino-acid chain: Probable translation initiation factor IF-2 (598 aa).

In terms of domain architecture, tr-type G spans 3–225 (LRCPIVSVLG…GLAQKFLEQK (223 aa)). A G1 region spans residues 12–19 (GHVDHGKT). GTP is bound at residue 12–19 (GHVDHGKT). The interval 37–41 (GITQH) is G2. A G3 region spans residues 76–79 (DTPG). GTP is bound by residues 76–80 (DTPGH) and 130–133 (NKVD). A G4 region spans residues 130-133 (NKVD). Residues 200 to 202 (SAM) are G5.

This sequence belongs to the TRAFAC class translation factor GTPase superfamily. Classic translation factor GTPase family. IF-2 subfamily.

Functionally, function in general translation initiation by promoting the binding of the formylmethionine-tRNA to ribosomes. Seems to function along with eIF-2. The protein is Probable translation initiation factor IF-2 of Methanococcus maripaludis (strain C7 / ATCC BAA-1331).